The following is a 495-amino-acid chain: MRGTPLLLVSLFALLQPGDCRLANAEEKLMDDLLNKTRYNNLIRPATSSSQLISIRLELSLSQLISVNEREQIMTTSIWLKQEWTDYRLAWNSSCYEGVNILRIPAKRVWLPDIVLYNNADGTYEVSVYTNVIVRSNGSIQWLPPAIYKSACKIEVKHFPFDQQNCTLKFRSWTYDHTEIDMVLKSPTAIMDDFTPSGEWDIVALPGRRTVNPQDPSYVDVTYDFIIKRKPLFYTINLIIPCVLITSLAILVFYLPSDCGEKMTLCISVLLALTFFLLLISKIVPPTSLDIPLIGKYLLFTMVLVTFSIVTTVCVLNVHHRSPSTHTMASWVKECFLHKLPTFLFMKRPGLEVSPARVPHSSQLHLTTAEATSTSALGPSSPSNLYGNSMYFVNPVPATPKSAVSSHTAGLPRDARLRSSGRFRQDLQEALEGVSFIAQHLESDDRDQSVIEDWKFVAMVVDRLFLWVFVIVCILGTMGLFLPPLFQIHAPSKGL.

A signal peptide spans Met1–Cys20. Residues Arg21–Thr235 are Extracellular-facing. N-linked (GlcNAc...) asparagine glycosylation is found at Asn35, Asn92, Asn137, and Asn165. Cysteines 152 and 166 form a disulfide. The helical transmembrane segment at Ile236–Pro256 threads the bilayer. Residues Ser257–Thr264 lie on the Cytoplasmic side of the membrane. Glu261 serves as a coordination point for Na(+). The helical transmembrane segment at Leu265–Pro285 threads the bilayer. The Extracellular segment spans residues Pro286 to Tyr297. The helical transmembrane segment at Leu298–Val318 threads the bilayer. At His319–Arg463 the chain is on the cytoplasmic side. Residues Leu464 to Pro484 traverse the membrane as a helical segment. At Leu485–Leu495 the chain is on the extracellular side.

The protein belongs to the ligand-gated ion channel (TC 1.A.9) family. Acetylcholine receptor (TC 1.A.9.1) subfamily. Beta-4/CHRNB4 sub-subfamily. As to quaternary structure, neuronal AChR is composed of two different types of subunits: alpha and beta. CHRNB4/Beta-4 subunit can be combined to CHRNA2/alpha-2, CHRNA3/alpha-3 or CHRNA4/alpha-4, CHRNA5/alpha-5 and CHRNB3/beta-3 to give rise to functional receptors. Forms stoichiometries such as (CHRNA3)2:(CHRNB4)3 or (CHRNA3:CHRNB4)2:CHRNB3. Interacts with RIC3; which is required for proper folding and assembly. Interacts with LYPD6. As to expression, predominantly expressed by immature T-cells in the thymus.

The protein resides in the synaptic cell membrane. It localises to the cell membrane. The catalysed reaction is K(+)(in) = K(+)(out). The enzyme catalyses Na(+)(in) = Na(+)(out). It catalyses the reaction Ca(2+)(in) = Ca(2+)(out). Activated by a myriad of ligands such as acetylcholine, cytisine, nicotine, choline and epibatidine. The heteropentamer CHRNA3:CHRNB4 activity is blocked by the alpha-conotoxin ImI and AuIB. Its function is as follows. Component of neuronal acetylcholine receptors (nAChRs) that function as pentameric, ligand-gated cation channels with high calcium permeability among other activities. nAChRs are excitatory neurotrasnmitter receptors formed by a collection of nAChR subunits known to mediate synaptic transmission in the nervous system and the neuromuscular junction. Each nAchR subunit confers differential attributes to channel properties, including activation, deactivation and desensitization kinetics, pH sensitivity, cation permeability, and binding to allosteric modulators. CHRNB4 forms heteropentameric neuronal acetylcholine receptors with CHRNA2, CHRNA3 and CHRNA4, as well as CHRNA5 and CHRNB3 as accesory subunits. CHRNA3:CHRNB4 being predominant in neurons of the autonomic ganglia, it is known as ganglionic nicotinic receptor. CHRNA3:CHRNB4 or CHRNA3:CHRNA5:CHRNB4 play also an important role in the habenulo-interpeduncular tract, modulating the mesolimbic dopamine system and affecting reward circuits and addiction. Hypothalamic CHRNA3:CHRNB4 nAChR activation by nicotine leads to activation of POMC neurons and a decrease in food intake. This chain is Neuronal acetylcholine receptor subunit beta-4 (Chrnb4), found in Mus musculus (Mouse).